A 377-amino-acid polypeptide reads, in one-letter code: MNNQSENYYHGAQFEALKSAGAIEMLGDGLTGDDLAAIPEHWLSYPAPPASAHTALALLYIFFTFAALVGNGMVIFIFSTTKSLRTSSNFLVLNLAILDFIMMAKAPIFIYNSAMRGFAVGTVGCQIFALMGAYSGIGAGMTNACIAYDRHSTITRPLDGRLSEGKVLLMVAFVWIYSTPWALLPLLKIWGRYVPEGYLTSCSFDYLTNTFDTKLFVACIFTCSYVFPMSLIIYFYSGIVKQVFAHEAALREQAKKMNVESLRANQGGSSESAEIRIAKAALTVCFLFVASWTPYGVMALIGAFGNQQLLTPGVTMIPAVACKAVACISPWVYAIRHPMYRQELQRRMPWLQIDEPDDTVSTATSNTTNSAPPAATA.

The Extracellular segment spans residues 1–57 (MNNQSENYYHGAQFEALKSAGAIEMLGDGLTGDDLAAIPEHWLSYPAPPASAHTALA). N-linked (GlcNAc...) asparagine glycosylation occurs at Asn3. A helical transmembrane segment spans residues 58-78 (LLYIFFTFAALVGNGMVIFIF). Residues 79-89 (STTKSLRTSSN) lie on the Cytoplasmic side of the membrane. The chain crosses the membrane as a helical span at residues 90–110 (FLVLNLAILDFIMMAKAPIFI). At 111 to 126 (YNSAMRGFAVGTVGCQ) the chain is on the extracellular side. Residues Cys125 and Cys202 are joined by a disulfide bond. Residues 127 to 146 (IFALMGAYSGIGAGMTNACI) form a helical membrane-spanning segment. At 147 to 166 (AYDRHSTITRPLDGRLSEGK) the chain is on the cytoplasmic side. Residues 167 to 187 (VLLMVAFVWIYSTPWALLPLL) form a helical membrane-spanning segment. Residues 188–214 (KIWGRYVPEGYLTSCSFDYLTNTFDTK) lie on the Extracellular side of the membrane. Residues 215–235 (LFVACIFTCSYVFPMSLIIYF) traverse the membrane as a helical segment. Over 236–283 (YSGIVKQVFAHEAALREQAKKMNVESLRANQGGSSESAEIRIAKAALT) the chain is Cytoplasmic. Residues 284 to 304 (VCFLFVASWTPYGVMALIGAF) form a helical membrane-spanning segment. The Extracellular segment spans residues 305–314 (GNQQLLTPGV). Residues 315–335 (TMIPAVACKAVACISPWVYAI) traverse the membrane as a helical segment. At 336–377 (RHPMYRQELQRRMPWLQIDEPDDTVSTATSNTTNSAPPAATA) the chain is on the cytoplasmic side. A disordered region spans residues 355-377 (EPDDTVSTATSNTTNSAPPAATA). Low complexity predominate over residues 361–377 (STATSNTTNSAPPAATA).

The protein belongs to the G-protein coupled receptor 1 family. Opsin subfamily. In terms of tissue distribution, in the retina, expression is essentially uniformly distributed, but a higher level is seen in the dorsal region of the retina and in the dorsal rim retinulae.

Its subcellular location is the membrane. Visual pigments are the light-absorbing molecules that mediate vision. They consist of an apoprotein, opsin, covalently linked to cis-retinal. May play a role in photoperiodic photoreception. The chain is Opsin-2 (OP2) from Manduca sexta (Tobacco hawkmoth).